A 147-amino-acid chain; its full sequence is Hemoglobin subunit epsilon (147 aa).

The Globin domain occupies 3 to 147 (HFTAEEKSTI…VATALAHKYH (145 aa)). Residues serine 14 and serine 51 each carry the phosphoserine modification. 2 residues coordinate heme b: histidine 64 and histidine 93.

The protein belongs to the globin family. In terms of assembly, heterotetramer of two alpha chains and two epsilon chains in early embryonic hemoglobin Gower-2; two zeta chains and two epsilon chains in early embryonic hemoglobin Gower-1. As to expression, red blood cells.

Functionally, the epsilon chain is a beta-type chain of early mammalian embryonic hemoglobin. In Microcebus murinus (Gray mouse lemur), this protein is Hemoglobin subunit epsilon (HBE1).